The primary structure comprises 783 residues: BMP/retinoic acid-inducible neural-specific protein 2 (783 aa).

The signal sequence occupies residues 1–33; the sequence is MRWPCSSRFRGLWPEAAPWAVLLALGVPGWVLA. Positions 85–281 constitute an MACPF domain; the sequence is RYRIYREFAR…FVAAALSYIT (197 aa). N-linked (GlcNAc...) asparagine glycans are attached at residues Asn-185, Asn-354, Asn-473, Asn-579, Asn-626, and Asn-658.

It belongs to the BRINP family. Expressed in olfactory bulb, cerebellum and neuronal layers in hippocampus.

It is found in the secreted. Inhibits neuronal cell proliferation by negative regulation of the cell cycle transition. The sequence is that of BMP/retinoic acid-inducible neural-specific protein 2 (Brinp2) from Rattus norvegicus (Rat).